The sequence spans 469 residues: Ribosomal protein uS12 methylthiotransferase RimO (469 aa).

The region spanning 17-132 is the MTTase N-terminal domain; sequence PRVGFVSLGC…VMDAVHLNLP (116 aa). Residues cysteine 26, cysteine 62, cysteine 91, cysteine 167, cysteine 171, and cysteine 174 each coordinate [4Fe-4S] cluster. The 243-residue stretch at 153–395 folds into the Radical SAM core domain; sequence LTPKHYAYLK…AVAEEVSSLK (243 aa). The TRAM domain maps to 397-469; that stretch reads QQRVGATMQV…QGHDLVAIPV (73 aa).

Belongs to the methylthiotransferase family. RimO subfamily. Requires [4Fe-4S] cluster as cofactor.

The protein resides in the cytoplasm. The enzyme catalyses L-aspartate(89)-[ribosomal protein uS12]-hydrogen + (sulfur carrier)-SH + AH2 + 2 S-adenosyl-L-methionine = 3-methylsulfanyl-L-aspartate(89)-[ribosomal protein uS12]-hydrogen + (sulfur carrier)-H + 5'-deoxyadenosine + L-methionine + A + S-adenosyl-L-homocysteine + 2 H(+). In terms of biological role, catalyzes the methylthiolation of an aspartic acid residue of ribosomal protein uS12. This is Ribosomal protein uS12 methylthiotransferase RimO from Polaromonas sp. (strain JS666 / ATCC BAA-500).